We begin with the raw amino-acid sequence, 41 residues long: Large ribosomal subunit protein bL36 (41 aa).

It belongs to the bacterial ribosomal protein bL36 family.

This Brucella abortus (strain S19) protein is Large ribosomal subunit protein bL36.